Reading from the N-terminus, the 633-residue chain is CDK5 and ABL1 enzyme substrate 1 (633 aa).

Residues 1 to 29 (MAAAAAAATTAACSSGSAGTDAAGASGLQ) are compositionally biased toward low complexity. The tract at residues 1–99 (MAAAAAAATT…EGGAAKPGAG (99 aa)) is disordered. The interval 1–109 (MAAAAAAATT…GACGARTRFS (109 aa)) is interaction with TDRD7. The span at 51 to 61 (PPRKPRMDPRR) shows a compositional bias: basic and acidic residues. Serine 168 and serine 287 each carry phosphoserine. Residues 179 to 492 (QWQPPRPAPL…TTVIDYVKPS (314 aa)) form an interaction with CDK3 region. At serine 313 the chain carries Phosphoserine; by CDK2 and CDK3. At threonine 415 the chain carries Phosphothreonine.

Belongs to the cyclin family. Found in a complex with p53/TP53. Found in a number of complexes with CDK2, CDK3, CDK5, ABL1, TDRD7, CDK17, CCNA1, CCNE1 and TP73. Interacts with CDK2, CDK3, CDK5, ABL1 and TDRD7. Phosphorylated on Ser-313 by CCNE1/CDK3. Phosphorylated on serine/threonine residues by CDK5 and on tyrosine residues by ABL1. Also phosphorylated in vitro by CCNA1/CDK2, CCNE1/CDK2, CCNA1/CDK3 and CCNE1/CDK3. In terms of tissue distribution, expressed in breast, pancreas, colon, head and neck (at protein level). Strongly decreased in more than half of cases of atypical endometrial hyperplasia and in more than 90% of endometrial cancers.

It localises to the nucleus. The protein resides in the cytoplasm. Cyclin-dependent kinase binding protein. Enhances cyclin-dependent kinase tyrosine phosphorylation by nonreceptor tyrosine kinases, such as that of CDK5 by activated ABL1, which leads to increased CDK5 activity and is critical for neuronal development, and that of CDK2 by WEE1, which leads to decreased CDK2 activity and growth inhibition. Positively affects neuronal outgrowth. Plays a role as a regulator for p53/p73-induced cell death. In Homo sapiens (Human), this protein is CDK5 and ABL1 enzyme substrate 1 (CABLES1).